Consider the following 465-residue polypeptide: Deoxyguanosinetriphosphate triphosphohydrolase-like protein (465 aa).

The disordered stretch occupies residues 1-22 (MKWDKLLNDKRRRESGVTRSKN). Residues 63–252 (RLTHSMEVST…LEVADDIAYL (190 aa)) enclose the HD domain.

Belongs to the dGTPase family. Type 3 subfamily.

The chain is Deoxyguanosinetriphosphate triphosphohydrolase-like protein from Listeria innocua serovar 6a (strain ATCC BAA-680 / CLIP 11262).